Reading from the N-terminus, the 175-residue chain is Type II restriction enzyme NgoBV (175 aa).

The catalysed reaction is Endonucleolytic cleavage of DNA to give specific double-stranded fragments with terminal 5'-phosphates.. Its function is as follows. A P subtype restriction enzyme that recognizes the double-stranded sequence 5'-GGNNCC-3'; the cleavage site is unknown. The chain is Type II restriction enzyme NgoBV (ngoBVR) from Neisseria gonorrhoeae.